Reading from the N-terminus, the 61-residue chain is Small ribosomal subunit protein bS21 (61 aa).

Belongs to the bacterial ribosomal protein bS21 family.

The protein is Small ribosomal subunit protein bS21 of Methylacidiphilum infernorum (isolate V4) (Methylokorus infernorum (strain V4)).